We begin with the raw amino-acid sequence, 269 residues long: Interleukin-1 beta (269 aa).

Positions 1–116 (MAEVPELASE…TWDNEAYVHD (116 aa)) are cleaved as a propeptide — removed in mature form; by CASP1. Positions 228–241 (FESAQFPNWYISTS) match the Involved in interaction with TMED10 C-terminus motif.

This sequence belongs to the IL-1 family. Monomer. In its precursor form, weakly interacts with full-length MEFV; the mature cytokine does not interact at all. Interacts with integrins ITGAV:ITGBV and ITGA5:ITGB1; integrin-binding is required for IL1B signaling. Interacts with cargo receptor TMED10; the interaction is direct and is required for the secretion of IL1B mature form. Interacts with HSP90AB1; the interaction facilitates cargo translocation into the ERGIC. Interacts with HSP90B1; the interaction facilitates cargo translocation into the ERGIC. Activation of the IL1B precursor involves a CASP1-catalyzed proteolytic cleavage. Processing and secretion are temporarily associated. In terms of processing, (Microbial infection) Cleavage by S.pyogenes cysteine protease SpeB promotes its activation independently of CASP1. Expressed in activated monocytes/macrophages (at protein level).

It is found in the cytoplasm. Its subcellular location is the cytosol. The protein localises to the secreted. It localises to the lysosome. The protein resides in the extracellular exosome. (Microbial infection) Cleavage by S.pyogenes cysteine protease SpeB promotes its activation independently of CASP1. SpeB-mediated maturation of IL1B plays a dual role depending on infection site: while IL1B inflammatory response prevents bacterial growth during invasive skin infections, it promotes streptococcal infection of the nasopharynx by disrupting colonization resistance mediated by the microbiota. Potent pro-inflammatory cytokine. Initially discovered as the major endogenous pyrogen, induces prostaglandin synthesis, neutrophil influx and activation, T-cell activation and cytokine production, B-cell activation and antibody production, and fibroblast proliferation and collagen production. Promotes Th17 differentiation of T-cells. Synergizes with IL12/interleukin-12 to induce IFNG synthesis from T-helper 1 (Th1) cells. Plays a role in angiogenesis by inducing VEGF production synergistically with TNF and IL6. Involved in transduction of inflammation downstream of pyroptosis: its mature form is specifically released in the extracellular milieu by passing through the gasdermin-D (GSDMD) pore. Acts as a sensor of S.pyogenes infection in skin: cleaved and activated by pyogenes SpeB protease, leading to an inflammatory response that prevents bacterial growth during invasive skin infection. The polypeptide is Interleukin-1 beta (Homo sapiens (Human)).